Here is a 311-residue protein sequence, read N- to C-terminus: Malate dehydrogenase (311 aa).

Residues Gly-7–Gly-13 and Asp-34 contribute to the NAD(+) site. Substrate-binding residues include Arg-81 and Arg-87. NAD(+)-binding positions include Asn-94 and Ile-117 to Asn-119. Substrate is bound by residues Asn-119 and Arg-153. The active-site Proton acceptor is the His-177. Residue Met-227 participates in NAD(+) binding.

This sequence belongs to the LDH/MDH superfamily. MDH type 1 family. In terms of assembly, homodimer.

The enzyme catalyses (S)-malate + NAD(+) = oxaloacetate + NADH + H(+). In terms of biological role, catalyzes the reversible oxidation of malate to oxaloacetate. This chain is Malate dehydrogenase, found in Haemophilus influenzae (strain PittEE).